A 92-amino-acid polypeptide reads, in one-letter code: UPF0250 protein XF_1271 (92 aa).

It belongs to the UPF0250 family.

The chain is UPF0250 protein XF_1271 from Xylella fastidiosa (strain 9a5c).